The sequence spans 102 residues: Urease subunit beta (102 aa).

This sequence belongs to the urease beta subunit family. In terms of assembly, heterotrimer of UreA (gamma), UreB (beta) and UreC (alpha) subunits. Three heterotrimers associate to form the active enzyme.

It is found in the cytoplasm. The enzyme catalyses urea + 2 H2O + H(+) = hydrogencarbonate + 2 NH4(+). It participates in nitrogen metabolism; urea degradation; CO(2) and NH(3) from urea (urease route): step 1/1. The sequence is that of Urease subunit beta from Blochmanniella pennsylvanica (strain BPEN).